We begin with the raw amino-acid sequence, 612 residues long: Alpha-glycerophosphate oxidase (612 aa).

21–49 (DLLIIGGGITGAGVALQAAASGLDTGLIE) contacts FAD. The span at 399-408 (ETSTSEKELD) shows a compositional bias: basic and acidic residues. The segment at 399–418 (ETSTSEKELDPSAVSRGSSF) is disordered.

This sequence belongs to the FAD-dependent glycerol-3-phosphate dehydrogenase family. FAD is required as a cofactor.

It localises to the cytoplasm. The enzyme catalyses sn-glycerol 3-phosphate + O2 = dihydroxyacetone phosphate + H2O2. The protein is Alpha-glycerophosphate oxidase (glpO) of Streptococcus pyogenes serotype M6 (strain ATCC BAA-946 / MGAS10394).